The chain runs to 287 residues: MDPDDAPPIRRSGFVAVIGRTNVGKSSLVNALAGERATIVSRHPNTTRRSVRVISRVGDAELVLVDTPGIAAAHDELSARLRRWVDDEWDGADRALLVVDAERGVGARERELASRLKPSDVAVVARIDRVRRARTLAVLAELAQVPLAEYFVASVRTGEGIEELRSYLASSLPEGPALYEAGVALDLPRATYVAEVVREEFLHHLRDELPQALACQVESWSDDGVEVVVYVERPSQRAIVLGHEGRVLAAVRRQAQRRLRAYPPLTLRVKVQRDWRRSARMLDELGL.

Residues 11–174 enclose the Era-type G domain; that stretch reads RSGFVAVIGR…RSYLASSLPE (164 aa). GTP-binding positions include 19–26 and 66–70; these read GRTNVGKS and DTPGI. The KH type-2 domain occupies 205–273; that stretch reads LRDELPQALA…PLTLRVKVQR (69 aa).

This sequence belongs to the TRAFAC class TrmE-Era-EngA-EngB-Septin-like GTPase superfamily. Era GTPase family. Monomer.

It is found in the cytoplasm. The protein localises to the cell membrane. Functionally, an essential GTPase that binds both GDP and GTP, with rapid nucleotide exchange. Plays a role in 16S rRNA processing and 30S ribosomal subunit biogenesis and possibly also in cell cycle regulation and energy metabolism. This chain is GTPase Era, found in Acidimicrobium ferrooxidans (strain DSM 10331 / JCM 15462 / NBRC 103882 / ICP).